The primary structure comprises 102 residues: Thioredoxin (102 aa).

Residues 2–102 (VTEIRSLKQL…KTKIIDLFNN (101 aa)) form the Thioredoxin domain. Cysteine 30 and cysteine 33 form a disulfide bridge.

This sequence belongs to the thioredoxin family.

Its function is as follows. Participates in various redox reactions through the reversible oxidation of its active center dithiol to a disulfide and catalyzes dithiol-disulfide exchange reactions. In Mycoplasma genitalium (strain ATCC 33530 / DSM 19775 / NCTC 10195 / G37) (Mycoplasmoides genitalium), this protein is Thioredoxin (trxA).